A 297-amino-acid polypeptide reads, in one-letter code: D-alanine--D-alanine ligase (297 aa).

The 200-residue stretch at 95–294 (KMLWKAFGLP…FEQLVVKILE (200 aa)) folds into the ATP-grasp domain. 125-180 (VAKLGLPLMVKPSLEGSSVGLTKVKAVEELKSAVEYALKFDNTILIEEWLAGDELT) is an ATP binding site. The Mg(2+) site is built by Asp-248, Glu-261, and Asn-263.

Belongs to the D-alanine--D-alanine ligase family. The cofactor is Mg(2+). It depends on Mn(2+) as a cofactor.

It localises to the cytoplasm. The catalysed reaction is 2 D-alanine + ATP = D-alanyl-D-alanine + ADP + phosphate + H(+). It participates in cell wall biogenesis; peptidoglycan biosynthesis. Functionally, cell wall formation. In Haemophilus influenzae (strain PittEE), this protein is D-alanine--D-alanine ligase.